Consider the following 190-residue polypeptide: Shikimate kinase (190 aa).

An ATP-binding site is contributed by G26–T31. S30 lines the Mg(2+) pocket. Substrate contacts are provided by D48, R72, and G94. Position 133 (R133) interacts with ATP. R152 lines the substrate pocket.

Belongs to the shikimate kinase family. Monomer. Mg(2+) is required as a cofactor.

Its subcellular location is the cytoplasm. It carries out the reaction shikimate + ATP = 3-phosphoshikimate + ADP + H(+). It functions in the pathway metabolic intermediate biosynthesis; chorismate biosynthesis; chorismate from D-erythrose 4-phosphate and phosphoenolpyruvate: step 5/7. Functionally, catalyzes the specific phosphorylation of the 3-hydroxyl group of shikimic acid using ATP as a cosubstrate. This Prochlorococcus marinus (strain SARG / CCMP1375 / SS120) protein is Shikimate kinase.